Consider the following 362-residue polypeptide: Endopolygalacturonase II (362 aa).

A signal peptide spans 1–21 (MHSFASLLAYGLAASATLASA). Positions 22 to 27 (SPIEAR) are excised as a propeptide. A disulfide bond links Cys-30 and Cys-45. The stretch at 156–186 (ADDITLTDITINNADGDTLGGHNTDAFDVGN) is one PbH1 1 repeat. The Proton donor role is filled by Asp-201. A disulfide bridge links Cys-203 with Cys-219. His-223 is a catalytic residue. 3 PbH1 repeats span residues 238–259 (VKNV…RIKT), 267–289 (VSEI…VIQQ), and 301–322 (TNGV…DSKA). Asn-240 is a glycosylation site (N-linked (GlcNAc...) (high mannose) asparagine). Intrachain disulfides connect Cys-329-Cys-334 and Cys-353-Cys-362.

Belongs to the glycosyl hydrolase 28 family.

The protein resides in the secreted. It carries out the reaction (1,4-alpha-D-galacturonosyl)n+m + H2O = (1,4-alpha-D-galacturonosyl)n + (1,4-alpha-D-galacturonosyl)m.. Functionally, involved in maceration and soft-rotting of plant tissue. Hydrolyzes the 1,4-alpha glycosidic bonds of de-esterified pectate in the smooth region of the plant cell wall. In Aspergillus niger, this protein is Endopolygalacturonase II.